A 389-amino-acid polypeptide reads, in one-letter code: Phospho-N-acetylmuramoyl-pentapeptide-transferase (389 aa).

Helical transmembrane passes span 25-45 (RAVM…PAVI), 73-93 (TMGG…WADL), 97-117 (FIWI…VDDY), 135-155 (FWQS…VSEA), 190-210 (ISYP…IVGA), 222-242 (GLVI…AYVM), 259-279 (AGEL…FLWF), 287-307 (FMGD…AVIV), 311-331 (IVLF…MLQV), and 366-386 (QVVV…LSTL).

The protein belongs to the glycosyltransferase 4 family. MraY subfamily. It depends on Mg(2+) as a cofactor.

The protein localises to the cell inner membrane. The catalysed reaction is UDP-N-acetyl-alpha-D-muramoyl-L-alanyl-gamma-D-glutamyl-meso-2,6-diaminopimeloyl-D-alanyl-D-alanine + di-trans,octa-cis-undecaprenyl phosphate = di-trans,octa-cis-undecaprenyl diphospho-N-acetyl-alpha-D-muramoyl-L-alanyl-D-glutamyl-meso-2,6-diaminopimeloyl-D-alanyl-D-alanine + UMP. It functions in the pathway cell wall biogenesis; peptidoglycan biosynthesis. Catalyzes the initial step of the lipid cycle reactions in the biosynthesis of the cell wall peptidoglycan: transfers peptidoglycan precursor phospho-MurNAc-pentapeptide from UDP-MurNAc-pentapeptide onto the lipid carrier undecaprenyl phosphate, yielding undecaprenyl-pyrophosphoryl-MurNAc-pentapeptide, known as lipid I. This is Phospho-N-acetylmuramoyl-pentapeptide-transferase from Paraburkholderia phytofirmans (strain DSM 17436 / LMG 22146 / PsJN) (Burkholderia phytofirmans).